We begin with the raw amino-acid sequence, 313 residues long: Putative serine protease 29 (313 aa).

The span at 1–22 (MPTTPDPGSEPPARTPRPPPLT) shows a compositional bias: pro residues. Residues 1-27 (MPTTPDPGSEPPARTPRPPPLTPGLSP) are disordered. The 243-residue stretch at 68–310 (IVGGHNAPPG…YVPWILQQVG (243 aa)) folds into the Peptidase S1 domain. C99 and C115 are disulfide-bonded. The active-site Charge relay system is H114. N-linked (GlcNAc...) asparagine glycosylation is present at N143. D161 acts as the Charge relay system in catalysis. Disulfide bonds link C193/C268, C226/C249, and C258/C286. The Charge relay system role is filled by S262.

It belongs to the peptidase S1 family.

The protein localises to the secreted. The chain is Putative serine protease 29 (PRSS29P) from Homo sapiens (Human).